Here is a 166-residue protein sequence, read N- to C-terminus: uncharacterized protein (166 aa).

ATP is bound at residue 117 to 124 (AAKSGGKT).

This is an uncharacterized protein from Mycoplasma pneumoniae (strain ATCC 29342 / M129 / Subtype 1) (Mycoplasmoides pneumoniae).